A 595-amino-acid chain; its full sequence is Leiomodin-1 (595 aa).

Disordered stretches follow at residues 1–69 (MSKV…EAML), 81–322 (QREM…KVKN), and 467–568 (DKQR…QEKN). S12 is modified (phosphoserine). Positions 27 to 40 (EEMEELEKELDVVD) are enriched in acidic residues. Composition is skewed to basic and acidic residues over residues 81-110 (QREM…DASR), 117-127 (QDSDLGKEPKK), 134-192 (FSRD…EKTG), 200-223 (SRDK…KLTA), 230-249 (GRRE…KPED), 257-287 (RDWR…KAPE), 467-476 (DKQRQKRLQE), and 484-493 (SGEKKDRLEV). S85 is subject to Phosphoserine. At S135 the chain carries Phosphoserine. Tandem repeats lie at residues 165 to 179 (AAVD…GREE), 180 to 195 (RAAA…GSVK), 196 to 211 (NAGL…EEVK), 212 to 226 (EPSK…AESR), 227 to 240 (NTVG…LKES), 242 to 255 (KENK…IGSG), 256 to 271 (GRDW…KEEN), and 272 to 288 (QPDK…APEK). The interval 165 to 288 (AAVDRKESGK…EESKTKAPEK (124 aa)) is 8 X approximate tandem repeats. The 5 X 4 AA approximate tandem repeats stretch occupies residues 503–522 (SPKPSPQPSPKPAPKNSPKK). Pro residues-rich tracts occupy residues 505-517 (KPSP…PAPK) and 527-538 (AAPPPPPPPLAP). S550 carries the post-translational modification Phosphoserine. In terms of domain architecture, WH2 spans 569–588 (SRDQLLAAIRSSNLKQLKKV).

Belongs to the tropomodulin family. As to expression, detected in aorta, urinary bladder and uterus (at protein level). Detected in smooth muscle cells. Detected in aorta, bladder, colon, intestine, stomach and uterus.

The protein localises to the cytoplasm. It is found in the myofibril. It localises to the sarcomere. The protein resides in the cytoskeleton. Functionally, required for proper contractility of visceral smooth muscle cells. Mediates nucleation of actin filaments. This Mus musculus (Mouse) protein is Leiomodin-1 (Lmod1).